A 352-amino-acid polypeptide reads, in one-letter code: MIKRRKTREIDVGGVKIGGDNPVVVQSMTDTKTHNIEETLSQIKRLADAGCEIIRVAVPTEKDAEALKEIVKRSPIPVIADIHFSPRIAFTALESGIHGIRLNPGNINDEGKIREILQECKKKNITVRLGVNSGSLEMGILEKYGFPSGEALAESALNWSEFFEKVGFTKFKVSIKGSDVLQNIEANKIFAEKTDIPLHIGITEAGPAGRGSVKSAVGLGILLYMGIGDTVRVSLTADPEEEVKVAYQILQSLGLRRRGIEIVSCPTCGRIEVNLPEVVRKVEEKLDGKNIPIKVAIMGCVVNAIGEAREADIGLACGNKSAILFKKGEPVKRVSEDQMIDQLLKEIDNLEI.

Residues Cys265, Cys268, Cys300, and Glu307 each contribute to the [4Fe-4S] cluster site.

This sequence belongs to the IspG family. [4Fe-4S] cluster is required as a cofactor.

The catalysed reaction is (2E)-4-hydroxy-3-methylbut-2-enyl diphosphate + oxidized [flavodoxin] + H2O + 2 H(+) = 2-C-methyl-D-erythritol 2,4-cyclic diphosphate + reduced [flavodoxin]. It functions in the pathway isoprenoid biosynthesis; isopentenyl diphosphate biosynthesis via DXP pathway; isopentenyl diphosphate from 1-deoxy-D-xylulose 5-phosphate: step 5/6. Functionally, converts 2C-methyl-D-erythritol 2,4-cyclodiphosphate (ME-2,4cPP) into 1-hydroxy-2-methyl-2-(E)-butenyl 4-diphosphate. The polypeptide is 4-hydroxy-3-methylbut-2-en-1-yl diphosphate synthase (flavodoxin) (Persephonella marina (strain DSM 14350 / EX-H1)).